The chain runs to 344 residues: Photosystem II protein D1 (344 aa).

Position 2 is an N-acetylthreonine (Thr-2). Thr-2 is modified (phosphothreonine). 3 helical membrane passes run 29–46 (YIGWFGCLMIPTLLTATS), 118–133 (HFFLGICAYMGREWEL), and 142–156 (WIAVAYSAPVAAATA). Chlorophyll a is bound at residue His-118. Tyr-126 lines the pheophytin a pocket. [CaMn4O5] cluster is bound by residues Asp-170 and Glu-189. A helical transmembrane segment spans residues 197 to 218 (FHMLGVAGVFGGSLFSAMHGSL). Position 198 (His-198) interacts with chlorophyll a. A quinone contacts are provided by residues His-215 and 264–265 (SF). His-215 contacts Fe cation. Fe cation is bound at residue His-272. Residues 274 to 288 (FLAAWPVIGIWFTAL) form a helical membrane-spanning segment. [CaMn4O5] cluster contacts are provided by His-332, Glu-333, Asp-342, and Ala-344.

Belongs to the reaction center PufL/M/PsbA/D family. PSII is composed of 1 copy each of membrane proteins PsbA, PsbB, PsbC, PsbD, PsbE, PsbF, PsbH, PsbI, PsbJ, PsbK, PsbL, PsbM, PsbT, PsbX, PsbY, PsbZ, Psb30/Ycf12, at least 3 peripheral proteins of the oxygen-evolving complex and a large number of cofactors. It forms dimeric complexes. The D1/D2 heterodimer binds P680, chlorophylls that are the primary electron donor of PSII, and subsequent electron acceptors. It shares a non-heme iron and each subunit binds pheophytin, quinone, additional chlorophylls, carotenoids and lipids. D1 provides most of the ligands for the Mn4-Ca-O5 cluster of the oxygen-evolving complex (OEC). There is also a Cl(-1) ion associated with D1 and D2, which is required for oxygen evolution. The PSII complex binds additional chlorophylls, carotenoids and specific lipids. is required as a cofactor. Tyr-161 forms a radical intermediate that is referred to as redox-active TyrZ, YZ or Y-Z.

It localises to the plastid. The protein localises to the chloroplast thylakoid membrane. The catalysed reaction is 2 a plastoquinone + 4 hnu + 2 H2O = 2 a plastoquinol + O2. Functionally, photosystem II (PSII) is a light-driven water:plastoquinone oxidoreductase that uses light energy to abstract electrons from H(2)O, generating O(2) and a proton gradient subsequently used for ATP formation. It consists of a core antenna complex that captures photons, and an electron transfer chain that converts photonic excitation into a charge separation. The D1/D2 (PsbA/PsbD) reaction center heterodimer binds P680, the primary electron donor of PSII as well as several subsequent electron acceptors. This chain is Photosystem II protein D1, found in Pleurastrum terricola (Filamentous green alga).